Consider the following 702-residue polypeptide: Ferrioxamine B receptor (702 aa).

The first 30 residues, 1–30 (MPLEMFMFATTRMALLIGGAIGGATFPLFA), serve as a signal peptide directing secretion. The TBDR plug domain maps to 55-168 (PDIETPQSVS…PGGIVALTSR (114 aa)). A TBDR beta-barrel domain is found at 173 to 702 (DAGGEVKLFA…SIVGSVSWAF (530 aa)).

The protein belongs to the TonB-dependent receptor family.

Its subcellular location is the cell outer membrane. Ferrioxamine binding and uptake, in association with the TonB protein. May play a role in intestinal colonization. The sequence is that of Ferrioxamine B receptor (foxA) from Salmonella typhimurium (strain SL1344).